The primary structure comprises 363 residues: tRNA (guanine(26)-N(2))-dimethyltransferase (363 aa).

Residues 5-352 form the Trm1 methyltransferase domain; sequence VLRREGGVKF…GEYGEVLMAF (348 aa). Residues R40, R67, D85, D111, and A112 each contribute to the S-adenosyl-L-methionine site.

It belongs to the class I-like SAM-binding methyltransferase superfamily. Trm1 family.

The catalysed reaction is guanosine(26) in tRNA + 2 S-adenosyl-L-methionine = N(2)-dimethylguanosine(26) in tRNA + 2 S-adenosyl-L-homocysteine + 2 H(+). Dimethylates a single guanine residue at position 26 of a number of tRNAs using S-adenosyl-L-methionine as donor of the methyl groups. The polypeptide is tRNA (guanine(26)-N(2))-dimethyltransferase (Pyrobaculum aerophilum (strain ATCC 51768 / DSM 7523 / JCM 9630 / CIP 104966 / NBRC 100827 / IM2)).